Here is a 276-residue protein sequence, read N- to C-terminus: Large ribosomal subunit protein uL2c (276 aa).

The interval 223–254 (VVKNPIDHPHGGGEGRSPIGRAKPVTPWGQPA) is disordered.

Belongs to the universal ribosomal protein uL2 family. In terms of assembly, part of the 50S ribosomal subunit.

Its subcellular location is the plastid. The protein localises to the chloroplast. This is Large ribosomal subunit protein uL2c (rpl2) from Emiliania huxleyi (Coccolithophore).